A 439-amino-acid polypeptide reads, in one-letter code: F-box/FBD/LRR-repeat protein At5g56570 (439 aa).

An F-box domain is found at 35 to 81; that stretch reads PTELSDMPDDLIFKIFSFLPFFKEDLATRFISEYGKGLWNPDPNAIF. LRR repeat units follow at residues 155-177 and 223-246; these read CTTL…WFRL and VPTL…SFWI. One can recognise an FBD domain in the interval 361 to 411; the sequence is VWEKPTVVPECLSTRLEILKWRDYEGTEHEKDMVGYILANATFLQRATFST.

This Arabidopsis thaliana (Mouse-ear cress) protein is F-box/FBD/LRR-repeat protein At5g56570.